The following is a 335-amino-acid chain: Tetraacyldisaccharide 4'-kinase (335 aa).

Position 58 to 65 (58 to 65 (TVGGVGKT)) interacts with ATP.

It belongs to the LpxK family.

It carries out the reaction a lipid A disaccharide + ATP = a lipid IVA + ADP + H(+). The protein operates within glycolipid biosynthesis; lipid IV(A) biosynthesis; lipid IV(A) from (3R)-3-hydroxytetradecanoyl-[acyl-carrier-protein] and UDP-N-acetyl-alpha-D-glucosamine: step 6/6. In terms of biological role, transfers the gamma-phosphate of ATP to the 4'-position of a tetraacyldisaccharide 1-phosphate intermediate (termed DS-1-P) to form tetraacyldisaccharide 1,4'-bis-phosphate (lipid IVA). The chain is Tetraacyldisaccharide 4'-kinase from Caulobacter sp. (strain K31).